We begin with the raw amino-acid sequence, 277 residues long: Sulfur carrier protein FdhD (277 aa).

Residue cysteine 121 is the Cysteine persulfide intermediate of the active site. 260 to 265 (FCKPGR) serves as a coordination point for Mo-bis(molybdopterin guanine dinucleotide).

The protein belongs to the FdhD family.

Its subcellular location is the cytoplasm. Functionally, required for formate dehydrogenase (FDH) activity. Acts as a sulfur carrier protein that transfers sulfur from IscS to the molybdenum cofactor prior to its insertion into FDH. The sequence is that of Sulfur carrier protein FdhD from Escherichia coli O8 (strain IAI1).